Consider the following 105-residue polypeptide: Nucleoid-associated protein cu1912 (105 aa).

It belongs to the YbaB/EbfC family. As to quaternary structure, homodimer.

It is found in the cytoplasm. It localises to the nucleoid. Binds to DNA and alters its conformation. May be involved in regulation of gene expression, nucleoid organization and DNA protection. The sequence is that of Nucleoid-associated protein cu1912 from Corynebacterium urealyticum (strain ATCC 43042 / DSM 7109).